The primary structure comprises 299 residues: Inosose dehydratase (299 aa).

This sequence belongs to the IolE/MocC family. It depends on glutathione as a cofactor. The cofactor is Co(2+). Mn(2+) serves as cofactor.

The catalysed reaction is scyllo-inosose = 3D-3,5/4-trihydroxycyclohexane-1,2-dione + H2O. Catalyzes the dehydration of inosose (2-keto-myo-inositol, 2KMI or 2,4,6/3,5-pentahydroxycyclohexanone) to 3D-(3,5/4)-trihydroxycyclohexane-1,2-dione (D-2,3-diketo-4-deoxy-epi-inositol). The polypeptide is Inosose dehydratase (Klebsiella pneumoniae (strain 342)).